A 497-amino-acid chain; its full sequence is Indoleacetaldoxime dehydratase (497 aa).

The chain crosses the membrane as a helical span at residues 2-20 (EMILSISLCLTTLITLLLL). Residue cysteine 439 coordinates heme.

The protein belongs to the cytochrome P450 family.

The protein localises to the membrane. It catalyses the reaction (E)-(indol-3-yl)acetaldehyde oxime = (indol-3-yl)acetonitrile + H2O. Involved in the biosynthesis of the indole-derived phytoalexin camalexin. Catalyzes the conversion of indole-3-acetaldoxime to indole-3-acetonitrile. Required for resistance to A.brassicicola and B.cinerea. The sequence is that of Indoleacetaldoxime dehydratase (CYP71A13) from Arabidopsis thaliana (Mouse-ear cress).